Consider the following 247-residue polypeptide: Protein FAM133B (247 aa).

Disordered stretches follow at residues S19–R38 and K70–P247. Basic and acidic residues predominate over residues K70 to L80. The residue at position 82 (S82) is a Phosphoserine. The span at K89–G102 shows a compositional bias: basic residues. Low complexity predominate over residues R103 to S119. Residues Q128–H140 show a composition bias toward basic residues. The span at K165–G176 shows a compositional bias: basic and acidic residues. Phosphoserine is present on residues S191, S192, S194, and S196. The span at S211–K221 shows a compositional bias: basic and acidic residues. A compositionally biased stretch (basic residues) spans T222–A239.

The protein belongs to the FAM133 family.

This Homo sapiens (Human) protein is Protein FAM133B (FAM133B).